The chain runs to 197 residues: Probable calcium-binding protein CML21 (197 aa).

Residues 1 to 33 (MLRPPPPSSVLTASAAAARPPASVVQPQRQAAH) form a disordered region. A compositionally biased stretch (low complexity) spans 9–30 (SVLTASAAAARPPASVVQPQRQ). EF-hand domains lie at 37–72 (AETLRLRRVFEMFDRDGDGVITPAELSGALCRLGAR), 126–161 (EKEADMREAFGVFDEDGDGYISAAELQAVLSRMGLP), and 164–197 (ACMARVRDMIAAADRDSDGRVDYEEFKAMMAAGN). Ca(2+)-binding residues include Asp-50, Asp-52, Asp-54, Glu-61, Asp-139, Asp-141, Asp-143, Tyr-145, Glu-150, Asp-177, Asp-179, Asp-181, Arg-183, and Glu-188.

Functionally, potential calcium sensor. The polypeptide is Probable calcium-binding protein CML21 (CML21) (Oryza sativa subsp. japonica (Rice)).